A 187-amino-acid polypeptide reads, in one-letter code: Pyridoxal 5'-phosphate synthase subunit PdxT (187 aa).

An L-glutamine-binding site is contributed by Gly47–Ser49. Cys76 (nucleophile) is an active-site residue. Residues Arg102 and Ile128–Arg129 each bind L-glutamine. Active-site charge relay system residues include His165 and Glu167.

Belongs to the glutaminase PdxT/SNO family. As to quaternary structure, in the presence of PdxS, forms a dodecamer of heterodimers. Only shows activity in the heterodimer.

It catalyses the reaction aldehydo-D-ribose 5-phosphate + D-glyceraldehyde 3-phosphate + L-glutamine = pyridoxal 5'-phosphate + L-glutamate + phosphate + 3 H2O + H(+). The enzyme catalyses L-glutamine + H2O = L-glutamate + NH4(+). Its pathway is cofactor biosynthesis; pyridoxal 5'-phosphate biosynthesis. Catalyzes the hydrolysis of glutamine to glutamate and ammonia as part of the biosynthesis of pyridoxal 5'-phosphate. The resulting ammonia molecule is channeled to the active site of PdxS. The protein is Pyridoxal 5'-phosphate synthase subunit PdxT of Methanococcus maripaludis (strain C7 / ATCC BAA-1331).